Consider the following 265-residue polypeptide: MIESQRHSYHLVDPSPWPISGSLGALATTVGGVMYMHSFQGGATLLSLGLIFLLYTMFVWWRDVLRESTLEGHHTKAVQLGPRYGSILFIVSEVMSFFLFFWASSHSSLAPTVEIGGIWPPKGIGVLDPWEIPLLNTPILPSSGAAVTWAHHAILAGKEKRAVYALVATVLLALVSTGFQGMEYYQAPSTISDSIYGSTFLLATGFHGFHVIIGTLFLIVCGIRQYLGHLTKKHHVGFEAAAWYWHFVDVVRLFPFVSIYWWGGT.

Helical transmembrane passes span 16-36 (PWPISGSLGALATTVGGVMYM), 41-61 (GGATLLSLGLIFLLYTMFVWW), 84-104 (YGSILFIVSEVMSFFLFFWAS), 162-182 (AVYALVATVLLALVSTGFQGM), 200-220 (FLLATGFHGFHVIIGTLFLIV), and 242-262 (AWYWHFVDVVRLFPFVSIYWW).

Belongs to the cytochrome c oxidase subunit 3 family. As to quaternary structure, component of the cytochrome c oxidase (complex IV, CIV), a multisubunit enzyme composed of a catalytic core of 3 subunits and several supernumerary subunits. The complex exists as a monomer or a dimer and forms supercomplexes (SCs) in the inner mitochondrial membrane with ubiquinol-cytochrome c oxidoreductase (cytochrome b-c1 complex, complex III, CIII).

Its subcellular location is the mitochondrion inner membrane. The enzyme catalyses 4 Fe(II)-[cytochrome c] + O2 + 8 H(+)(in) = 4 Fe(III)-[cytochrome c] + 2 H2O + 4 H(+)(out). Functionally, component of the cytochrome c oxidase, the last enzyme in the mitochondrial electron transport chain which drives oxidative phosphorylation. The respiratory chain contains 3 multisubunit complexes succinate dehydrogenase (complex II, CII), ubiquinol-cytochrome c oxidoreductase (cytochrome b-c1 complex, complex III, CIII) and cytochrome c oxidase (complex IV, CIV), that cooperate to transfer electrons derived from NADH and succinate to molecular oxygen, creating an electrochemical gradient over the inner membrane that drives transmembrane transport and the ATP synthase. Cytochrome c oxidase is the component of the respiratory chain that catalyzes the reduction of oxygen to water. Electrons originating from reduced cytochrome c in the intermembrane space (IMS) are transferred via the dinuclear copper A center (CU(A)) of subunit 2 and heme A of subunit 1 to the active site in subunit 1, a binuclear center (BNC) formed by heme A3 and copper B (CU(B)). The BNC reduces molecular oxygen to 2 water molecules using 4 electrons from cytochrome c in the IMS and 4 protons from the mitochondrial matrix. This Zea mays (Maize) protein is Cytochrome c oxidase subunit 3 (COX3).